Reading from the N-terminus, the 368-residue chain is Quinolinate synthase (368 aa).

2 residues coordinate iminosuccinate: histidine 46 and serine 63. Residue cysteine 110 participates in [4Fe-4S] cluster binding. Residues 141–143 and serine 162 contribute to the iminosuccinate site; that span reads YVN. Cysteine 230 provides a ligand contact to [4Fe-4S] cluster. Residues 256 to 258 and threonine 273 each bind iminosuccinate; that span reads HPE. Cysteine 320 lines the [4Fe-4S] cluster pocket.

Belongs to the quinolinate synthase family. Type 3 subfamily. [4Fe-4S] cluster serves as cofactor.

Its subcellular location is the cytoplasm. It carries out the reaction iminosuccinate + dihydroxyacetone phosphate = quinolinate + phosphate + 2 H2O + H(+). It functions in the pathway cofactor biosynthesis; NAD(+) biosynthesis; quinolinate from iminoaspartate: step 1/1. Its function is as follows. Catalyzes the condensation of iminoaspartate with dihydroxyacetone phosphate to form quinolinate. The polypeptide is Quinolinate synthase (Bacillus cereus (strain G9842)).